Consider the following 113-residue polypeptide: Large ribosomal subunit protein uL22 (113 aa).

The protein belongs to the universal ribosomal protein uL22 family. Part of the 50S ribosomal subunit.

In terms of biological role, this protein binds specifically to 23S rRNA; its binding is stimulated by other ribosomal proteins, e.g. L4, L17, and L20. It is important during the early stages of 50S assembly. It makes multiple contacts with different domains of the 23S rRNA in the assembled 50S subunit and ribosome. Functionally, the globular domain of the protein is located near the polypeptide exit tunnel on the outside of the subunit, while an extended beta-hairpin is found that lines the wall of the exit tunnel in the center of the 70S ribosome. The protein is Large ribosomal subunit protein uL22 of Geobacillus sp. (strain WCH70).